The sequence spans 305 residues: UDP-3-O-acyl-N-acetylglucosamine deacetylase (305 aa).

Positions 78, 237, and 241 each coordinate Zn(2+). Catalysis depends on histidine 264, which acts as the Proton donor.

The protein belongs to the LpxC family. Requires Zn(2+) as cofactor.

It catalyses the reaction a UDP-3-O-[(3R)-3-hydroxyacyl]-N-acetyl-alpha-D-glucosamine + H2O = a UDP-3-O-[(3R)-3-hydroxyacyl]-alpha-D-glucosamine + acetate. The protein operates within glycolipid biosynthesis; lipid IV(A) biosynthesis; lipid IV(A) from (3R)-3-hydroxytetradecanoyl-[acyl-carrier-protein] and UDP-N-acetyl-alpha-D-glucosamine: step 2/6. Catalyzes the hydrolysis of UDP-3-O-myristoyl-N-acetylglucosamine to form UDP-3-O-myristoylglucosamine and acetate, the committed step in lipid A biosynthesis. The protein is UDP-3-O-acyl-N-acetylglucosamine deacetylase of Burkholderia ambifaria (strain MC40-6).